The following is a 36-amino-acid chain: MEVNILAFIATALFILVPTAFLLIIYVKTESQNKKN.

The chain crosses the membrane as a helical span at residues 5 to 25 (ILAFIATALFILVPTAFLLII).

This sequence belongs to the PsbM family. In terms of assembly, PSII is composed of 1 copy each of membrane proteins PsbA, PsbB, PsbC, PsbD, PsbE, PsbF, PsbH, PsbI, PsbJ, PsbK, PsbL, PsbM, PsbT, PsbX, PsbY, PsbZ, Psb30/Ycf12, at least 3 peripheral proteins of the oxygen-evolving complex and a large number of cofactors. It forms dimeric complexes.

Its subcellular location is the plastid. The protein resides in the chloroplast thylakoid membrane. Functionally, one of the components of the core complex of photosystem II (PSII). PSII is a light-driven water:plastoquinone oxidoreductase that uses light energy to abstract electrons from H(2)O, generating O(2) and a proton gradient subsequently used for ATP formation. It consists of a core antenna complex that captures photons, and an electron transfer chain that converts photonic excitation into a charge separation. This subunit is found at the monomer-monomer interface. In Panax ginseng (Korean ginseng), this protein is Photosystem II reaction center protein M.